A 110-amino-acid polypeptide reads, in one-letter code: U1-lycotoxin-Ls1bb (110 aa).

The N-terminal stretch at 1–20 (MKFVLLFGVLLVTLFSYSSA) is a signal peptide. A propeptide spanning residues 21-44 (EMLDDFDQADEDELLSLIEKEEAR) is cleaved from the precursor. Cystine bridges form between Cys-47–Cys-62, Cys-54–Cys-71, Cys-61–Cys-89, and Cys-73–Cys-87.

It belongs to the neurotoxin 19 (CSTX) family. 03 subfamily. As to expression, expressed by the venom gland.

The protein localises to the secreted. This is U1-lycotoxin-Ls1bb from Lycosa singoriensis (Wolf spider).